Consider the following 403-residue polypeptide: Metacaspase-1 (403 aa).

The tract at residues 1–95 is disordered; the sequence is MFPGSGHNTY…PSGSQSFGQN (95 aa). Positions 13 to 22 are enriched in pro residues; the sequence is YPPPQGPPPN. 2 stretches are compositionally biased toward low complexity: residues 23 to 34 and 49 to 62; these read NNGYNSGPNNSY and QYDQ…QSQP. Active-site residues include H193 and C249.

Belongs to the peptidase C14B family.

In terms of biological role, involved in cell death (apoptosis). The protein is Metacaspase-1 (MCA1) of Scheffersomyces stipitis (strain ATCC 58785 / CBS 6054 / NBRC 10063 / NRRL Y-11545) (Yeast).